Consider the following 289-residue polypeptide: ATP synthase gamma chain (289 aa).

Belongs to the ATPase gamma chain family. As to quaternary structure, F-type ATPases have 2 components, CF(1) - the catalytic core - and CF(0) - the membrane proton channel. CF(1) has five subunits: alpha(3), beta(3), gamma(1), delta(1), epsilon(1). CF(0) has three main subunits: a, b and c.

The protein localises to the cell membrane. Produces ATP from ADP in the presence of a proton gradient across the membrane. The gamma chain is believed to be important in regulating ATPase activity and the flow of protons through the CF(0) complex. This chain is ATP synthase gamma chain, found in Mycoplasmoides gallisepticum (strain R(low / passage 15 / clone 2)) (Mycoplasma gallisepticum).